The primary structure comprises 411 residues: Serpin A3-3 (411 aa).

The signal sequence occupies residues 1–24; the sequence is MRAERLSPLLALGLLVAGIRSVHC. Asn100, Asn180, Asn230, Asn264, and Asn318 each carry an N-linked (GlcNAc...) asparagine glycan.

It belongs to the serpin family. As to quaternary structure, homodimer.

Its subcellular location is the cytoplasmic vesicle. It is found in the secretory vesicle. It localises to the chromaffin granule. The protein localises to the secreted. Its function is as follows. Serine protease inhibitor. Strongly inhibits elastase and trypsin stoichiometrically at the molar ratio of 1:1. Acts as a moderate inhibitor of plasmin and chymotrypsin. Does not inhibit thrombin, urokinase, kallikrein, tissue plasminogen activator, cathepsin G or the cysteine proteases papain, cathepsin B or cathepsin L. This Bos taurus (Bovine) protein is Serpin A3-3 (SERPINA3-3).